The following is a 634-amino-acid chain: MFSRLVLLRKVSISLGRYYSSQAHPQTYIYNLLSKSKCRSCGIQLQDKYPDKPGFYRLPGQNDNNTDNKSKTSELNKKYEKILQNLDVSDRNLLINNFSAPKQEHEKITSVPSLQQVTPVEEDACDTLEVQKTQQGQSLSCKRCNDVIYNSKNKSVYDPKRDNLNKSEFPIPKLQQVLSTIPIDAPLVYVFSANDFPMGINQEIFQYRPPQQIFFVMTKSDILIPKTNVAFYNNFKKFLQNYMFKRFNVPRENVFIASGKDRWKMNDLYHFIPNYAYIIGDTNCGKSTLVKSLLINHHVKHWKYEARQQRQNERPNGKQSSSASLKNKDFKQLDRLIDSFSSKNGPGTSHIPGFTRDVVPVDIDGIKQLFDVPGFTTNENMQDIFDKLNHKQIARITKGTSTFKYGSLKSKFDTIKNGQVLSLNGVGYLQFPGQDSMYQIRNVTRFALHKFKNLEKVDSILQRNEIPTSMSSHFIVNRQQQQQQRNEIRGYYKRYIVPPFYGTIDLVIKDIGYINIKPTGKKLTNELMVLYLHPSLEAIIRQPILNYIDPPSPKKLIDGTKMKSFITSDIGKTPFYSRLIPSKIPSDPSSFLASSPSSDYNQLNQYLQIDESSESAYNDILELDETNKYDYWIE.

Residues 1 to 40 constitute a mitochondrion transit peptide; the sequence is MFSRLVLLRKVSISLGRYYSSQAHPQTYIYNLLSKSKCRS. In terms of domain architecture, CP-type G spans 171 to 378; the sequence is IPKLQQVLST…LFDVPGFTTN (208 aa).

This sequence belongs to the TRAFAC class YlqF/YawG GTPase family. GEP3 subfamily.

It is found in the mitochondrion. In terms of biological role, may be involved in the mitochondrial lipid metabolism. The polypeptide is Genetic interactor of prohibitins 3, mitochondrial (GEP3) (Candida dubliniensis (strain CD36 / ATCC MYA-646 / CBS 7987 / NCPF 3949 / NRRL Y-17841) (Yeast)).